The primary structure comprises 620 residues: DNA mismatch repair protein MutL (620 aa).

The interval Ser353–Gly375 is disordered.

It belongs to the DNA mismatch repair MutL/HexB family.

Its function is as follows. This protein is involved in the repair of mismatches in DNA. It is required for dam-dependent methyl-directed DNA mismatch repair. May act as a 'molecular matchmaker', a protein that promotes the formation of a stable complex between two or more DNA-binding proteins in an ATP-dependent manner without itself being part of a final effector complex. The polypeptide is DNA mismatch repair protein MutL (Chelativorans sp. (strain BNC1)).